Here is a 190-residue protein sequence, read N- to C-terminus: Recombination protein RecR (190 aa).

A C4-type zinc finger spans residues 58 to 73 (CEQCGALSENELCEIC). Residues 81 to 167 (NILCIVESPK…TFSKIAQGIP (87 aa)) form the Toprim domain.

The protein belongs to the RecR family.

Its function is as follows. May play a role in DNA repair. It seems to be involved in an RecBC-independent recombinational process of DNA repair. It may act with RecF and RecO. This Campylobacter jejuni (strain RM1221) protein is Recombination protein RecR.